The sequence spans 120 residues: Large ribosomal subunit protein uL18 (120 aa).

Belongs to the universal ribosomal protein uL18 family. Part of the 50S ribosomal subunit; part of the 5S rRNA/L5/L18/L25 subcomplex. Contacts the 5S and 23S rRNAs.

This is one of the proteins that bind and probably mediate the attachment of the 5S RNA into the large ribosomal subunit, where it forms part of the central protuberance. The protein is Large ribosomal subunit protein uL18 of Brucella anthropi (strain ATCC 49188 / DSM 6882 / CCUG 24695 / JCM 21032 / LMG 3331 / NBRC 15819 / NCTC 12168 / Alc 37) (Ochrobactrum anthropi).